Reading from the N-terminus, the 860-residue chain is MQEQYRPEEIESKVQLHWDEKRTFEVTEDESKEKYYCLSMLPYPSGRLHMGHVRNYTIGDVIARYQRMLGKNVLQPIGWDAFGLPAEGAAVKNNTAPAPWTYDNIAYMKNQLKMLGFGYDWSRELATCTPEYYRWEQKFFTELYKKGLVYKKTSAVNWCPNDQTVLANEQVIDGCCWRCDTKVERKEIPQWFIKITAYADELLNDLDKLDHWPDTVKTMQRNWIGRSEGVEITFNVNDYDNTLTVYTTRPDTFMGCTYLAVAAGHPLAQKAAENNPELAAFIDECRNTKVAEAEMATMEKKGVDTGFKAVHPLTGEEIPVWAANFVLMEYGTGAVMAVPGHDQRDYEFASKYGLNIKPVILAADGSEPDLSQQALTEKGVLFNSGEFNGLDHEAAFNAIADKLTAMGVGERKVNYRLRDWGVSRQRYWGAPIPMVTLEDGTVMPTPDDQLPVILPEDVVMDGITSPIKADPEWAKTTVNGMPALRETDTFDTFMESSWYYARYTCPQYKEGMLDSEAANYWLPVDIYIGGIEHAIMHLLYFRFFHKLMRDAGMVNSDEPAKQLLCQGMVLADAFYYVGENGERNWVSPVDAIVERDEKGRIVKAKDAAGHELVYTGMSKMSKSKNNGIDPQVMVERYGADTVRLFMMFASPADMTLEWQESGVEGANRFLKRIWKLVYEHTAKGDVAALNVDALTEDQKALRRDVHKTIAKVTDDIGRRQTFNTAIAAIMELMNKLAKAPTDGEQDRALMQEALLAVVRMLNPFTPHICFTLWQELKGEGDIDNAPWPVADEKAMVEDSTLVVVQVNGKVRAKITVPVDATEEQVRERAGQEHLVAKYLDGVTVRKVIYVPGKLLNLVVG.

Residues 42-52 (PYPSGRLHMGH) carry the 'HIGH' region motif. Residues 619 to 623 (KMSKS) carry the 'KMSKS' region motif. An ATP-binding site is contributed by K622.

The protein belongs to the class-I aminoacyl-tRNA synthetase family.

It localises to the cytoplasm. The catalysed reaction is tRNA(Leu) + L-leucine + ATP = L-leucyl-tRNA(Leu) + AMP + diphosphate. This is Leucine--tRNA ligase from Escherichia coli (strain ATCC 8739 / DSM 1576 / NBRC 3972 / NCIMB 8545 / WDCM 00012 / Crooks).